The following is a 382-amino-acid chain: Alkaline serine protease ver112 (382 aa).

An N-terminal signal peptide occupies residues M1–A15. The propeptide occupies A16–N102. The Inhibitor I9 domain maps to S56–F99. Positions T111–T382 constitute a Peptidase S8 domain. 2 disulfides stabilise this stretch: C138/C227 and C282/C353. Active-site charge relay system residues include D143, H173, and S328.

This sequence belongs to the peptidase S8 family.

Its subcellular location is the secreted. Its activity is regulated as follows. Inhibited by phenylmethylsulfonyl fluoride (PMSF). In terms of biological role, serine protease which can degrade the nematode cuticle. The sequence is that of Alkaline serine protease ver112 from Corniculantispora psalliotae (Lecanicillium psalliotae).